The chain runs to 864 residues: Translation initiation factor IF-2 (864 aa).

Positions 1-252 (MEDKNKTIKE…KTSSDKRDFS (252 aa)) are disordered. The segment covering 78–90 (KEVKYEESSRKQD) has biased composition (basic and acidic residues). A compositionally biased stretch (polar residues) spans 106-120 (VRPSGDSSYPVSRSP). Positions 150–212 (RGPGQGGGYQ…PGNRSGGPGG (63 aa)) are enriched in gly residues. Basic and acidic residues predominate over residues 239 to 252 (HDKEKTSSDKRDFS). A tr-type G domain is found at 359 to 528 (NRPPVVTIMG…LLQAEVMDLK (170 aa)). The segment at 368–375 (GHVDHGKT) is G1. 368-375 (GHVDHGKT) lines the GTP pocket. Residues 393–397 (GITQH) are G2. The segment at 414 to 417 (DTPG) is G3. GTP is bound by residues 414 to 418 (DTPGH) and 468 to 471 (NKID). Residues 468–471 (NKID) form a G4 region. Residues 504–506 (SAR) are G5.

It belongs to the TRAFAC class translation factor GTPase superfamily. Classic translation factor GTPase family. IF-2 subfamily.

It is found in the cytoplasm. In terms of biological role, one of the essential components for the initiation of protein synthesis. Protects formylmethionyl-tRNA from spontaneous hydrolysis and promotes its binding to the 30S ribosomal subunits. Also involved in the hydrolysis of GTP during the formation of the 70S ribosomal complex. This Leptospira borgpetersenii serovar Hardjo-bovis (strain L550) protein is Translation initiation factor IF-2.